The following is a 152-amino-acid chain: Protein SprT-like (152 aa).

One can recognise a SprT-like domain in the interval 9–149 (LQKLTETISL…CGKCNGKLKE (141 aa)). His70 contacts Zn(2+). Glu71 is a catalytic residue. His74 is a binding site for Zn(2+).

This sequence belongs to the SprT family. Zn(2+) is required as a cofactor.

Its subcellular location is the cytoplasm. The polypeptide is Protein SprT-like (Staphylococcus saprophyticus subsp. saprophyticus (strain ATCC 15305 / DSM 20229 / NCIMB 8711 / NCTC 7292 / S-41)).